A 377-amino-acid polypeptide reads, in one-letter code: tRNA pseudouridine synthase B (377 aa).

D53 (nucleophile) is an active-site residue.

Belongs to the pseudouridine synthase TruB family. Type 1 subfamily.

The catalysed reaction is uridine(55) in tRNA = pseudouridine(55) in tRNA. Functionally, responsible for synthesis of pseudouridine from uracil-55 in the psi GC loop of transfer RNAs. The chain is tRNA pseudouridine synthase B from Tropheryma whipplei (strain Twist) (Whipple's bacillus).